Reading from the N-terminus, the 190-residue chain is Putative glutathione-dependent formaldehyde-activating enzyme (190 aa).

The 147-residue stretch at 19–165 (FKGGKLYCHC…FRKVGLQPYD (147 aa)) folds into the CENP-V/GFA domain. Zn(2+)-binding residues include C26, C28, C47, C49, C52, C94, and C97.

Belongs to the Gfa family. It depends on Zn(2+) as a cofactor.

The enzyme catalyses S-(hydroxymethyl)glutathione = glutathione + formaldehyde. The protein operates within one-carbon metabolism; formaldehyde degradation; formate from formaldehyde (glutathione route): step 1/3. Functionally, catalyzes the condensation of formaldehyde and glutathione to S-hydroxymethylglutathione. The sequence is that of Putative glutathione-dependent formaldehyde-activating enzyme from Pyrenophora teres f. teres (strain 0-1) (Barley net blotch fungus).